Reading from the N-terminus, the 601-residue chain is Multidrug and toxin extrusion protein 2 (601 aa).

The Cytoplasmic portion of the chain corresponds to 1 to 62 (MNTAFAGFDE…PRGFWDEARA (62 aa)). Residues 63 to 83 (LFVLSGPLFLFQVLNFLTYVV) traverse the membrane as a helical segment. Topologically, residues 84–95 (GTVFCGHLGKVE) are extracellular. The helical transmembrane segment at 96-116 (LASVTLGVAFVNVCGVSVGAG) threads the bilayer. The Cytoplasmic portion of the chain corresponds to 117–145 (LSSACDTLMSQSFGSPNKKHVGVILQRGS). The helical transmembrane segment at 146-166 (LILLLCCLPCWALFLNTQHIL) threads the bilayer. The Extracellular portion of the chain corresponds to 167–182 (LLFRQDPAVSRLTQDY). Residues 183–203 (AMIFIPGLPAIFLYSLLAKYL) traverse the membrane as a helical segment. Over 204–212 (QNQGIVWPQ) the chain is Cytoplasmic. The chain crosses the membrane as a helical span at residues 213–233 (VLSGVVGNCVNGVANYALVSV). Residues 234-241 (LNLGVRGS) lie on the Extracellular side of the membrane. The helical transmembrane segment at 242 to 262 (AYANTISQFVQAAFLFLHIVL) threads the bilayer. Topologically, residues 263–281 (KKLHLETWEGWSSQCLRDW) are cytoplasmic. The chain crosses the membrane as a helical span at residues 282-301 (GPFLSLAIPSMLMMCVEWWA). Over 302–320 (YEIGSFLMGLLGVVDLSGQ) the chain is Extracellular. A helical membrane pass occupies residues 321–341 (AIIYEVATVVYMIPMGLGMAV). Residues 342 to 361 (CVRVGTALGAADTLQAKRSA) lie on the Cytoplasmic side of the membrane. Residues 362–382 (VSGLLCTAGTSLVVGTLLGLL) traverse the membrane as a helical segment. Over 383-402 (NSQLGYIFTSDEEVIALVNQ) the chain is Extracellular. Residues 403 to 423 (VLPIYIVFQLVEAVCCVFGGV) traverse the membrane as a helical segment. Residues 424-437 (LRGTGKQAFGAIVN) lie on the Cytoplasmic side of the membrane. Residues 438 to 458 (AIMYYIVGLPLGIVLTFVVGM) form a helical membrane-spanning segment. Residue R459 is a topological domain, extracellular. A helical transmembrane segment spans residues 460 to 480 (IMGLWLGMLTCIFLAAVTFVV). Residues 481–577 (YAVQLDWKLA…LSVRQLLFRR (97 aa)) lie on the Cytoplasmic side of the membrane. The chain crosses the membrane as a helical span at residues 578–598 (GAALAASVAVLMAGLLVRVLT). Residues 599–601 (TGY) are Extracellular-facing.

This sequence belongs to the multi antimicrobial extrusion (MATE) (TC 2.A.66.1) family. In terms of tissue distribution, expressed in renal cortical tissues.

The protein localises to the cell membrane. The protein resides in the apical cell membrane. It catalyses the reaction thiamine(out) + H(+)(in) = thiamine(in) + H(+)(out). The catalysed reaction is estrone 3-sulfate(in) + H(+)(out) = estrone 3-sulfate(out) + H(+)(in). It carries out the reaction creatinine(in) + H(+)(out) = creatinine(out) + H(+)(in). In terms of biological role, multidrug efflux pump that functions as a H(+)/organic cation antiporter. Mediates the efflux of cationic compounds, such as the model cations, tetraethylammonium (TEA) and 1-methyl-4-phenylpyridinium (MPP+), the platinum-based drug oxaliplatin or weak bases that are positively charged at physiological pH, cimetidine or the antidiabetic drug metformin. Mediates the efflux of the endogenous compounds creatinine, thiamine and estrone-3-sulfate. Plays a physiological role in the excretion of drugs, toxins and endogenous metabolites through the kidney. The sequence is that of Multidrug and toxin extrusion protein 2 (SLC47A2) from Oryctolagus cuniculus (Rabbit).